Consider the following 61-residue polypeptide: Pleurocidin-like peptide WF3 (61 aa).

The signal sequence occupies residues 1-22 (MKFTATFLVLSLVVLMAEPGEC). Positions 48-61 (YDEQQELNKRAVDE) are excised as a propeptide.

This sequence belongs to the pleurocidin family.

Its subcellular location is the secreted. In terms of biological role, antimicrobial peptide. This chain is Pleurocidin-like peptide WF3 (ple3), found in Pseudopleuronectes americanus (Winter flounder).